Here is a 346-residue protein sequence, read N- to C-terminus: uncharacterized protein (346 aa).

The disordered stretch occupies residues 321–346; it reads TPWGTHSVAGVGPPPYARSGPASATT.

This is an uncharacterized protein from Mycobacterium tuberculosis (strain CDC 1551 / Oshkosh).